A 147-amino-acid polypeptide reads, in one-letter code: Peptide methionine sulfoxide reductase MsrB (147 aa).

Residues 1–11 are compositionally biased toward basic and acidic residues; the sequence is MPKIVKKEPKF. A disordered region spans residues 1 to 25; it reads MPKIVKKEPKFVEQSGKKVTKSDEQ. The 123-residue stretch at 23-145 folds into the MsrB domain; the sequence is DEQWREQLSD…NSVSLIFNKS (123 aa). Residues C62, C65, C111, and C114 each contribute to the Zn(2+) site. Residue C134 is the Nucleophile of the active site.

The protein belongs to the MsrB Met sulfoxide reductase family. Zn(2+) is required as a cofactor.

The catalysed reaction is L-methionyl-[protein] + [thioredoxin]-disulfide + H2O = L-methionyl-(R)-S-oxide-[protein] + [thioredoxin]-dithiol. This is Peptide methionine sulfoxide reductase MsrB from Vibrio parahaemolyticus serotype O3:K6 (strain RIMD 2210633).